Reading from the N-terminus, the 298-residue chain is Glutamate/glycine mitochondrial carrier ymc1 (298 aa).

Solcar repeat units follow at residues 14–98 (TKDF…CKRF), 106–193 (VTMP…LVKN), and 206–294 (TPGW…VSQH). The next 6 helical transmembrane spans lie at 17 to 37 (FLAGVSGGVAQVLVGQPFDCV), 67 to 87 (LAAFYKGTVLPLLGIGFCVSI), 112 to 132 (YVSGAISGLANSFLVGPVEHV), 172 to 192 (TAAREAHGLGMYFLAYEALVK), 212 to 232 (CVFGAGAGYAMWLAAYPFDIV), and 266 to 287 (FYRGFVPVLVRAAPANAVTFYV).

Belongs to the mitochondrial carrier (TC 2.A.29) family.

Its subcellular location is the mitochondrion inner membrane. In terms of biological role, acts as a glutamate and glycine mitochondrial transmembrane transporter. The sequence is that of Glutamate/glycine mitochondrial carrier ymc1 (ymc1) from Schizosaccharomyces pombe (strain 972 / ATCC 24843) (Fission yeast).